Consider the following 187-residue polypeptide: Hypoxanthine/guanine phosphoribosyltransferase (187 aa).

This sequence belongs to the purine/pyrimidine phosphoribosyltransferase family. Archaeal HPRT subfamily. In terms of assembly, homodimer.

Its subcellular location is the cytoplasm. The enzyme catalyses IMP + diphosphate = hypoxanthine + 5-phospho-alpha-D-ribose 1-diphosphate. It carries out the reaction GMP + diphosphate = guanine + 5-phospho-alpha-D-ribose 1-diphosphate. It participates in purine metabolism; IMP biosynthesis via salvage pathway; IMP from hypoxanthine: step 1/1. Catalyzes a salvage reaction resulting in the formation of IMP that is energically less costly than de novo synthesis. This Methanococcus voltae (strain ATCC BAA-1334 / A3) protein is Hypoxanthine/guanine phosphoribosyltransferase.